We begin with the raw amino-acid sequence, 137 residues long: Small ribosomal subunit protein uS12 (137 aa).

The segment at 1-57 (MPTINQLVRKPRKSKTKQSDSPVLNRGFNSKKKQFTNLNSPQKRGVCTRVGTMTPRK) is disordered. 3-methylthioaspartic acid is present on Asp-102. Residues 118–137 (SGVDGRRQGRSLYGTKKPKN) are disordered.

The protein belongs to the universal ribosomal protein uS12 family. Part of the 30S ribosomal subunit. Contacts proteins S8 and S17. May interact with IF1 in the 30S initiation complex.

Functionally, with S4 and S5 plays an important role in translational accuracy. In terms of biological role, interacts with and stabilizes bases of the 16S rRNA that are involved in tRNA selection in the A site and with the mRNA backbone. Located at the interface of the 30S and 50S subunits, it traverses the body of the 30S subunit contacting proteins on the other side and probably holding the rRNA structure together. The combined cluster of proteins S8, S12 and S17 appears to hold together the shoulder and platform of the 30S subunit. The sequence is that of Small ribosomal subunit protein uS12 from Staphylococcus epidermidis (strain ATCC 12228 / FDA PCI 1200).